We begin with the raw amino-acid sequence, 160 residues long: Protein-export protein SecB (160 aa).

Belongs to the SecB family. Homotetramer, a dimer of dimers. One homotetramer interacts with 1 SecA dimer.

Its subcellular location is the cytoplasm. One of the proteins required for the normal export of preproteins out of the cell cytoplasm. It is a molecular chaperone that binds to a subset of precursor proteins, maintaining them in a translocation-competent state. It also specifically binds to its receptor SecA. The chain is Protein-export protein SecB from Aliivibrio salmonicida (strain LFI1238) (Vibrio salmonicida (strain LFI1238)).